The sequence spans 618 residues: Methylmalonyl-CoA mutase small subunit (618 aa).

It belongs to the methylmalonyl-CoA mutase family. In terms of assembly, heterodimer of an alpha and a beta chain. Adenosylcob(III)alamin is required as a cofactor.

It catalyses the reaction (R)-methylmalonyl-CoA = succinyl-CoA. Its pathway is metabolic intermediate metabolism; propanoyl-CoA degradation; succinyl-CoA from propanoyl-CoA: step 3/3. Catalyzes the isomerization of succinyl-CoA to methylmalonyl-CoA during synthesis of propionate from tricarboxylic acid-cycle intermediates. This chain is Methylmalonyl-CoA mutase small subunit (mutA), found in Porphyromonas gingivalis (strain ATCC BAA-308 / W83).